The sequence spans 451 residues: Arginine biosynthesis bifunctional protein ArgJ, mitochondrial (451 aa).

Substrate is bound by residues threonine 180, lysine 209, threonine 220, glutamate 307, asparagine 446, and threonine 451. The active-site Nucleophile is the threonine 220.

It belongs to the ArgJ family. As to quaternary structure, heterodimer of an alpha and a beta chain. Post-translationally, the alpha and beta chains are autoproteolytically processed from a single precursor protein within the mitochondrion.

It is found in the mitochondrion matrix. The enzyme catalyses N(2)-acetyl-L-ornithine + L-glutamate = N-acetyl-L-glutamate + L-ornithine. The catalysed reaction is L-glutamate + acetyl-CoA = N-acetyl-L-glutamate + CoA + H(+). The protein operates within amino-acid biosynthesis; L-arginine biosynthesis; L-ornithine and N-acetyl-L-glutamate from L-glutamate and N(2)-acetyl-L-ornithine (cyclic): step 1/1. It participates in amino-acid biosynthesis; L-arginine biosynthesis; N(2)-acetyl-L-ornithine from L-glutamate: step 1/4. Its function is as follows. Catalyzes two activities which are involved in the cyclic version of arginine biosynthesis: the synthesis of acetylglutamate from glutamate and acetyl-CoA, and of ornithine by transacetylation between acetylornithine and glutamate. This chain is Arginine biosynthesis bifunctional protein ArgJ, mitochondrial, found in Fusarium vanettenii (strain ATCC MYA-4622 / CBS 123669 / FGSC 9596 / NRRL 45880 / 77-13-4) (Fusarium solani subsp. pisi).